Reading from the N-terminus, the 714-residue chain is Polyribonucleotide nucleotidyltransferase (714 aa).

Mg(2+)-binding residues include D487 and D493. One can recognise a KH domain in the interval 554–613; sequence PRIEVLQIPTDKIRDVIGTGGKVIREIVEKTGAKINIEDDGTVKVASANGESIRAAIKWI. The S1 motif domain occupies 623–691; the sequence is GQIYDGTVVK…DRGKVRLSMK (69 aa).

This sequence belongs to the polyribonucleotide nucleotidyltransferase family. Requires Mg(2+) as cofactor.

Its subcellular location is the cytoplasm. It carries out the reaction RNA(n+1) + phosphate = RNA(n) + a ribonucleoside 5'-diphosphate. In terms of biological role, involved in mRNA degradation. Catalyzes the phosphorolysis of single-stranded polyribonucleotides processively in the 3'- to 5'-direction. The polypeptide is Polyribonucleotide nucleotidyltransferase (Afipia carboxidovorans (strain ATCC 49405 / DSM 1227 / KCTC 32145 / OM5) (Oligotropha carboxidovorans)).